Reading from the N-terminus, the 69-residue chain is M-poneratoxin-Dq4e (69 aa).

The N-terminal stretch at 1–25 (MKLSAFTLAFALILMMAIMYNMAEA) is a signal peptide. Positions 26 to 39 (AALADADADAEAIA) are excised as a propeptide.

In terms of tissue distribution, expressed by the venom gland.

Its subcellular location is the secreted. Functionally, may have antimicrobial properties, like most ant linear peptides. In addition, when tested in vitro on the parasite Trypanosoma cruzi (responsible of the Chagas disease), is able to moderately reduce the number of the three forms (epimastigote, trypomastigote and amastigote) by inducing cell death through necrosis. The polypeptide is M-poneratoxin-Dq4e (Dinoponera quadriceps (South American ant)).